Reading from the N-terminus, the 327-residue chain is Taste receptor type 2 member 102 (327 aa).

Residues 1 to 7 (MEPVIYS) are Extracellular-facing. The helical transmembrane segment at 8-28 (FATLLIHVEFIFGNLSNGFIV) threads the bilayer. The Cytoplasmic segment spans residues 29–46 (LSNFWDWVIKRKLSTIDK). Residues 47–67 (ILLTLAISRITLIWEIYTWFT) traverse the membrane as a helical segment. Over 68 to 87 (SVYGPSSFAIGMKLQILYFT) the chain is Extracellular. A helical membrane pass occupies residues 88–108 (WILSSHFSLWFATALSIFYLL). The Cytoplasmic portion of the chain corresponds to 109-124 (RIANCSWKIFLYLKWR). Residues 125 to 145 (LKQVIVGMLLASLVFLPGILT) form a helical membrane-spanning segment. Over 146-179 (QRTLEERPYRYGGNTSEDSMETDFARFTELILFN) the chain is Extracellular. N-linked (GlcNAc...) asparagine glycans are attached at residues Asn159 and Asn179. Residues 180–200 (LTIFSVIPFSLASISFLLLIF) form a helical membrane-spanning segment. Residues 201-229 (SLWKHLRKMQLSSRGHGDPSTKAHTNALR) lie on the Cytoplasmic side of the membrane. The helical transmembrane segment at 230–250 (IMVSFLLLYSIYFLSLLLSWI) threads the bilayer. The Extracellular segment spans residues 251 to 260 (AQKHHSKLVD). Residues 261 to 281 (IIGIITGLMYPSAHSFILILG) form a helical membrane-spanning segment. Residues 282 to 327 (NSKLMQTSLWILSHLRCRLKGENILNPSGNQVTSCYIFCIANKSVS) are Cytoplasmic-facing.

This sequence belongs to the G-protein coupled receptor T2R family.

It localises to the membrane. In terms of biological role, putative taste receptor which may play a role in the perception of bitterness. The sequence is that of Taste receptor type 2 member 102 from Rattus norvegicus (Rat).